We begin with the raw amino-acid sequence, 702 residues long: MADS-box MEF2 type transcription factor MIG1 (702 aa).

The MADS-box domain maps to Met1–Asp61. Disordered stretches follow at residues Gly73 to Thr608 and Pro658 to Ser702. Positions Gly86–Asp96 are enriched in acidic residues. Positions Ala132–Pro144 are enriched in pro residues. Residues His145–Pro155 are compositionally biased toward low complexity. Polar residues predominate over residues Gly180–Met195. A compositionally biased stretch (pro residues) spans Thr201–Pro241. 3 stretches are compositionally biased toward low complexity: residues Pro273 to Pro284, Glu326 to Glu343, and Glu350 to Pro371. Over residues Val456–Glu465 the composition is skewed to polar residues. Low complexity-rich tracts occupy residues Arg487–Ala512 and Asp530–Ser553. The span at Gln554–Met567 shows a compositional bias: polar residues. A compositionally biased stretch (pro residues) spans Pro587–Pro600. The segment covering Asn693–Ser702 has biased composition (basic and acidic residues).

The protein belongs to the MEF2 family. As to quaternary structure, interacts with MAPK MPS1.

Its subcellular location is the nucleus. Its function is as follows. Transcription factor acting downstream of the MPS1 MAP kinase (MAPK) cascade during conidiation and plant infection. Required for overcoming plant defense responses and the differentiation of secondary infectious hyphae in live plant cells. The chain is MADS-box MEF2 type transcription factor MIG1 from Pyricularia oryzae (Rice blast fungus).